Reading from the N-terminus, the 788-residue chain is Structure-specific endonuclease subunit SLX4 (788 aa).

3 disordered regions span residues 59 to 86 (LQNENLENKNKDTSITKPKRRSKRDNNR), 562 to 584 (KRQPVDSENEIRDSEDEGEHDNS), and 599 to 622 (DLVNLGRNPRNENDTSVLQVPSSP). Basic and acidic residues predominate over residues 562-573 (KRQPVDSENEIR). A compositionally biased stretch (polar residues) spans 612–622 (DTSVLQVPSSP).

Belongs to the SLX4 family. As to quaternary structure, forms a heterodimer with SLX1. Phosphorylated in response to DNA damage.

Its subcellular location is the nucleus. Its function is as follows. Regulatory subunit of the SLX1-SLX4 structure-specific endonuclease that resolves DNA secondary structures generated during DNA repair and recombination. Has endonuclease activity towards branched DNA substrates, introducing single-strand cuts in duplex DNA close to junctions with ss-DNA. This chain is Structure-specific endonuclease subunit SLX4, found in Debaryomyces hansenii (strain ATCC 36239 / CBS 767 / BCRC 21394 / JCM 1990 / NBRC 0083 / IGC 2968) (Yeast).